Reading from the N-terminus, the 156-residue chain is Small ribosomal subunit protein uS7 (156 aa).

The protein belongs to the universal ribosomal protein uS7 family. Part of the 30S ribosomal subunit. Contacts proteins S9 and S11.

Its function is as follows. One of the primary rRNA binding proteins, it binds directly to 16S rRNA where it nucleates assembly of the head domain of the 30S subunit. Is located at the subunit interface close to the decoding center, probably blocks exit of the E-site tRNA. This Rhizobium meliloti (strain 1021) (Ensifer meliloti) protein is Small ribosomal subunit protein uS7.